Consider the following 589-residue polypeptide: Phenylalanine--tRNA ligase beta subunit (589 aa).

Residues 302-379 enclose the B5 domain; that stretch reads LAYRKEMVRA…IAYGYSNIQM (78 aa). Mg(2+)-binding residues include Asp-357, Asp-363, Glu-366, and Asp-367.

The protein belongs to the phenylalanyl-tRNA synthetase beta subunit family. Type 2 subfamily. Heterotetramer; dimer of two heterodimers formed by FARSA and FARSB. It depends on Mg(2+) as a cofactor.

The protein localises to the cytoplasm. It catalyses the reaction tRNA(Phe) + L-phenylalanine + ATP = L-phenylalanyl-tRNA(Phe) + AMP + diphosphate + H(+). The polypeptide is Phenylalanine--tRNA ligase beta subunit (FARSB) (Pongo abelii (Sumatran orangutan)).